Reading from the N-terminus, the 273-residue chain is MVNTCTYLPLSGKVALVTGGGRGIGAGIALELARRGASVAINYGHSAKSAQEVVEAIQAIGRQAVAIQADLTCVPNIESLIQEVVRHFGRLDIVVSNSGMEKFKPLEETTLEDFNEVFNLNTRAQMFVARYAYDHIQPGGRVILMSSIAAGLGVPGHALYAGSKAAIEGFTRCLAADFGRKGCTVNAIAPAGVKSDMWRENAWRYAPGCDKSSSLEEIETALASGSPLKRCGVPEDIGKVVSFLASPDAEWVNGEFFSPPPCKGPLPGGDLEC.

Residues Ile-24, Asp-70, Asn-97, and Arg-130 each contribute to the NADP(+) site. Catalysis depends on proton donor residues Ser-146 and Ser-147. NADP(+) contacts are provided by Tyr-160, Lys-164, Val-193, and Ser-195. The Proton acceptor role is filled by Tyr-160. Lys-164 functions as the Lowers pKa of active site Tyr in the catalytic mechanism.

This sequence belongs to the short-chain dehydrogenases/reductases (SDR) family.

Its subcellular location is the endosome. The protein operates within pigment biosynthesis; melanin biosynthesis. Its activity is regulated as follows. Tricyclazole and pyroquilon inhibit arp2 hydroxynaphtalene reductase activity. Its function is as follows. Hydroxynaphthalene reductase; part of the gene cluster that mediates the biosynthesis of dihydroxynaphthalene (DHN)-melanin, a bluish-green pigment and a structural component of the conidial wall. The first step of the pathway is the production of the heptaketide naphtopyrone YWA1 by the polyketide synthase alb1 though condensation of acetyl-CoA with malonyl-CoA. The naphtopyrone YWA1 is then converted to the pentaketide 1,3,6,8-tetrahydroxynaphthalene (1,3,6,8-THN) by the heptaketide hydrolyase ayg1 though chain-length shortening. 1,3,6,8-THN is substrate of the hydroxynaphthalene reductase arp2 to yield scytalone. The scytalone dehydratase arp1 then reduces scytalone to 1,3,8-THN. 1,3,8-THN is also substrate of the hydroxynaphthalene reductase arp2 to yield vermelone. Vermelone is further converted by the multicopper oxidase abr1 to 1,8-DHN. Finally the laccase abr2 transforms 1,8-DHN to DHN-melanin. DHN-melanin biosynthesis appears to be initiated in endosomes where early enzymes (abl1, ayg1, arp1 and arp2) localize, with exocytosis leading to melanin deposition on the cell surface where late enzymes (abr1 and abr2) localize. DHN-melanin is an important structural component of the outer cell wall and is required for the presence of conidial surface hydrophobins. DHN-melanin also plays a crucial role in fungal virulence, including a protective role against the host's immune defenses. DHN-melanin also protects conidia against amoeba predation. The protein is Hydroxynaphthalene reductase arp2 of Aspergillus fumigatus (strain ATCC MYA-4609 / CBS 101355 / FGSC A1100 / Af293) (Neosartorya fumigata).